The primary structure comprises 377 residues: Probable G-protein coupled receptor 27 (377 aa).

The Extracellular segment spans residues 1 to 24 (MANASEPGGGGGGAEAAALGLRLA). N-linked (GlcNAc...) asparagine glycosylation occurs at asparagine 3. The helical transmembrane segment at 25 to 45 (TLSLLLCVSLAGNVLFALLIV) threads the bilayer. Topologically, residues 46 to 56 (RERSLHRAPYY) are cytoplasmic. The chain crosses the membrane as a helical span at residues 57–77 (LLLDLCLADGLRALACLPAVM). Residues 78–98 (LAARRAAAAAGTPPGALGCKL) lie on the Extracellular side of the membrane. A disulfide bridge links cysteine 96 with cysteine 173. A helical membrane pass occupies residues 99–119 (LAFLAALFCFHAAFLLLGVGV). Topologically, residues 120 to 140 (TRYLAIAHHRFYAERLAGWPC) are cytoplasmic. Residues 141–161 (AAMLVCAAWALALAAAFPPVL) traverse the membrane as a helical segment. Over 162–183 (DGGGADDEDAPCALEQRPDGAP) the chain is Extracellular. A helical membrane pass occupies residues 184-204 (GALGFLLLLAAVVGATHLVYL). The Cytoplasmic portion of the chain corresponds to 205–287 (RLLFFIHDRR…FKTEKRLCKM (83 aa)). The chain crosses the membrane as a helical span at residues 288-308 (FYAITLLFLLLWGPYVVASYL). The Extracellular segment spans residues 309-322 (RVLVRPGAVPQAYL). The chain crosses the membrane as a helical span at residues 323–343 (TASVWLTFAQAGINPVVCFLF). The Cytoplasmic segment spans residues 344 to 377 (NRELRDCFRAQFPCCQSPQATQATLPCDLKGIGL).

This sequence belongs to the G-protein coupled receptor 1 family. In terms of tissue distribution, expressed as a 3.0 kb transcript, in whole brain, hippocampus, striatum, frontal cortex, thalamus, pons and hypothalamus. A lower molecular weight transcript was detected in all regions examined, except the hypothalamus.

It localises to the cell membrane. Its function is as follows. Orphan receptor. Possible candidate for amine-like G-protein coupled receptor. In Rattus norvegicus (Rat), this protein is Probable G-protein coupled receptor 27 (Gpr27).